The primary structure comprises 303 residues: tRNA pseudouridine synthase B (303 aa).

Catalysis depends on Asp47, which acts as the Nucleophile.

The protein belongs to the pseudouridine synthase TruB family. Type 1 subfamily.

The enzyme catalyses uridine(55) in tRNA = pseudouridine(55) in tRNA. Responsible for synthesis of pseudouridine from uracil-55 in the psi GC loop of transfer RNAs. The protein is tRNA pseudouridine synthase B of Roseobacter denitrificans (strain ATCC 33942 / OCh 114) (Erythrobacter sp. (strain OCh 114)).